We begin with the raw amino-acid sequence, 79 residues long: Large ribosomal subunit protein uL29 (79 aa).

It belongs to the universal ribosomal protein uL29 family.

The polypeptide is Large ribosomal subunit protein uL29 (Gluconacetobacter diazotrophicus (strain ATCC 49037 / DSM 5601 / CCUG 37298 / CIP 103539 / LMG 7603 / PAl5)).